The following is a 308-amino-acid chain: MEFNQHTTVLLNETIELLHVKPDGIYVDCTFGRGGHSQLILKKLSKKGKLICIDQDQQAIDFANNLFKDNPNVIVIKTNFKNLKSVLYDHQIFHVDGFVFDLGLSSPQLDDPERGFSYHKDALLDMRMDQEQKLNAHYIVNHYSFAKLVNIFTKYGEIKYAKTIANGIVKERSTKAINTTLELVEIIKNYSPKKILFEKKHPARLFFQAIRIEVNDELNILKKAFNDAISMLNPLGVVAIISFHSLEDKIVKKVFNNYAKNKLPKEIPLNNYVNQYSLLNQKIMPSTQELNDNNRSRSSILRGLVKNY.

Residues 34-36 (GGH), D54, F80, D101, and Q108 each bind S-adenosyl-L-methionine.

This sequence belongs to the methyltransferase superfamily. RsmH family.

The protein resides in the cytoplasm. The catalysed reaction is cytidine(1402) in 16S rRNA + S-adenosyl-L-methionine = N(4)-methylcytidine(1402) in 16S rRNA + S-adenosyl-L-homocysteine + H(+). In terms of biological role, specifically methylates the N4 position of cytidine in position 1402 (C1402) of 16S rRNA. The protein is Ribosomal RNA small subunit methyltransferase H of Ureaplasma urealyticum serovar 10 (strain ATCC 33699 / Western).